Reading from the N-terminus, the 61-residue chain is Small ribosomal subunit protein uS14 (61 aa).

Positions 24, 27, 40, and 43 each coordinate Zn(2+).

This sequence belongs to the universal ribosomal protein uS14 family. Zinc-binding uS14 subfamily. As to quaternary structure, part of the 30S ribosomal subunit. Contacts proteins S3 and S10. The cofactor is Zn(2+).

In terms of biological role, binds 16S rRNA, required for the assembly of 30S particles and may also be responsible for determining the conformation of the 16S rRNA at the A site. This Geobacillus stearothermophilus (Bacillus stearothermophilus) protein is Small ribosomal subunit protein uS14.